Here is a 272-residue protein sequence, read N- to C-terminus: MDQFAVFGNPVAHSKSPRIHQLFARQTGIEHRYGKILVPISKFQEALDTFLKQGGIGVNITVPFKEQAFIRANELTERARLSGAVNTLKLLNNNQLLGDNTDGIGLLTDLMRLEFITQGQHILIIGAGGAARGVLFPLLEFGCKITITNRTFSRAIQVANNFSAIGSIRPAEMKVLNSPEFDLIINATASGINGEIPTISPFIFNENCVCYDMFYQANLTPFISFARKHGVSRYADGLGMLVGQAAHSFKLWHGVLPEISPVLLTLEQELRS.

Shikimate contacts are provided by residues 14–16 and threonine 61; that span reads SKS. Lysine 65 acts as the Proton acceptor in catalysis. Position 77 (glutamate 77) interacts with NADP(+). Positions 86 and 102 each coordinate shikimate. Residues 126–130, 149–154, and methionine 213 contribute to the NADP(+) site; these read GAGGA and NRTFSR. Tyrosine 215 provides a ligand contact to shikimate. NADP(+) is bound at residue glycine 237.

Belongs to the shikimate dehydrogenase family. Homodimer.

The enzyme catalyses shikimate + NADP(+) = 3-dehydroshikimate + NADPH + H(+). It participates in metabolic intermediate biosynthesis; chorismate biosynthesis; chorismate from D-erythrose 4-phosphate and phosphoenolpyruvate: step 4/7. Its function is as follows. Involved in the biosynthesis of the chorismate, which leads to the biosynthesis of aromatic amino acids. Catalyzes the reversible NADPH linked reduction of 3-dehydroshikimate (DHSA) to yield shikimate (SA). This Photorhabdus laumondii subsp. laumondii (strain DSM 15139 / CIP 105565 / TT01) (Photorhabdus luminescens subsp. laumondii) protein is Shikimate dehydrogenase (NADP(+)).